The following is a 156-amino-acid chain: Ribosomal RNA large subunit methyltransferase H (156 aa).

S-adenosyl-L-methionine is bound by residues Leu-73, Gly-104, and 123–128 (LSPLTL).

Belongs to the RNA methyltransferase RlmH family. In terms of assembly, homodimer.

Its subcellular location is the cytoplasm. The enzyme catalyses pseudouridine(1915) in 23S rRNA + S-adenosyl-L-methionine = N(3)-methylpseudouridine(1915) in 23S rRNA + S-adenosyl-L-homocysteine + H(+). Functionally, specifically methylates the pseudouridine at position 1915 (m3Psi1915) in 23S rRNA. The protein is Ribosomal RNA large subunit methyltransferase H of Photobacterium profundum (strain SS9).